Consider the following 201-residue polypeptide: 3-isopropylmalate dehydratase small subunit (201 aa).

The protein belongs to the LeuD family. LeuD type 1 subfamily. Heterodimer of LeuC and LeuD.

It catalyses the reaction (2R,3S)-3-isopropylmalate = (2S)-2-isopropylmalate. It functions in the pathway amino-acid biosynthesis; L-leucine biosynthesis; L-leucine from 3-methyl-2-oxobutanoate: step 2/4. Its function is as follows. Catalyzes the isomerization between 2-isopropylmalate and 3-isopropylmalate, via the formation of 2-isopropylmaleate. In Escherichia coli O127:H6 (strain E2348/69 / EPEC), this protein is 3-isopropylmalate dehydratase small subunit.